The sequence spans 462 residues: Argininosuccinate lyase (462 aa).

It belongs to the lyase 1 family. Argininosuccinate lyase subfamily.

It is found in the cytoplasm. It carries out the reaction 2-(N(omega)-L-arginino)succinate = fumarate + L-arginine. It functions in the pathway amino-acid biosynthesis; L-arginine biosynthesis; L-arginine from L-ornithine and carbamoyl phosphate: step 3/3. This Streptococcus agalactiae serotype III (strain NEM316) protein is Argininosuccinate lyase.